A 438-amino-acid chain; its full sequence is Xylose isomerase (438 aa).

Catalysis depends on residues His100 and Asp103. Mg(2+) is bound by residues Glu231, Glu267, His270, Asp295, Asp306, Asp308, and Asp338.

This sequence belongs to the xylose isomerase family. In terms of assembly, homotetramer. It depends on Mg(2+) as a cofactor.

The protein resides in the cytoplasm. The enzyme catalyses alpha-D-xylose = alpha-D-xylulofuranose. The sequence is that of Xylose isomerase (xylA) from Thermoanaerobacter pseudethanolicus (strain ATCC 33223 / 39E) (Clostridium thermohydrosulfuricum).